The following is a 1431-amino-acid chain: MGKEQELVQAVKAEDVGTAQRLLQRPRPGKAKLLGSTKKINVNFQDPDGFSALHHAALNGNTELISLLLEAQAAVDIKDNKGMRPLHYAAWQGRKEPMKLVLKAGSAVNVPSDEGHIPLHLAAQHGHYDVSEMLLQHQSNPCMVDNSGKTPLDLACEFGRVGVVQLLLSSNMCAALLEPRPGDTTDPNGTSPLHLAAKNGHIDIIRLLLQAGIDINRQTKSGTALHEAALCGKTEVVRLLLDSGINAQVRNTYSQTALDIVHQFTTSQASKEIKQLLREASAALQVRATKDYCNNYDLTSLNVKAGDIITVLEQHPDGRWKGCIHDNRTGNDRVGYFPSSLGEAIVKRAGSRTGSEPSPPQGGGSLGPSAPPEEIWVLRKPFAGGDRSGSLSNVAGGRSTGGHALHAGSEGVKLLATVLSQKSVSESSPGDSPVKPPEGSSGAARSQPPAAHAGQVYGEQPPKKLESASASASEGKSAEAVSQWLATFQLQLYAPNFTSAGYDLPTISRMTPEDLTAIGVTKPGHRKKITAEISGLNIPDWLPEHKPANLAVWLSMIGLAQYYKVLVDNGYENIDFITDITWEDLQEIGITKLGHQKKLMLAVRKLAELQKAEYSKYEGGPLRRKTPQSLEMMAIESPPPSEPAAAECQSPKMTTFQDSELSGELQAALSGPAEAGAAAVEKSSNHLPPTPRTTSRESSLSGRARHISSSQELLGDGPPGPGSPMSRSQEYLLDEGMAPGTPPKEVRSSRHGHSVKRASVPPVPGKPRQVLPSGASHFTPPQTPTKAQPGSPQALGGPHGPATAKVKPTPQLLPPTDRPMSPRSLPQSPTHRGFAYVLPQPVEGEVGPPAPGPAPPPVPAAVPTLCLPPETDVEPGRPKKRAHSLNRYAASDSEPERDELLVPAAAGPYATVQRRVGRSHSVRAPAGTDKNVNRSQSFAVRPRKKGPPPPPPKRSSSAMASANLADEPAPDVEAEDGRLGVRAQRRRASDLAGSVDTGSAGSVKSIAAMLELSSIGGGGRAIRRPPEGHPTPRPASPEPGRVATVLASVKHKEAIGPDGEVVNRRRTLSGPVTGLLATARRGSGEPAEQSHFMEDGTARQRLRGPAKGEASAEGPPLARVEASATLKRRIRAKQSQQENVKFILTESDTVKRRPKAKEPDTGPEPPPPLSVYQNGTATVRRRPTSEQAGPPELPPPPPPAEPPPADLMQLPPLPLPDGNARKPVKPPVSPKPILSQPVSKIQGSPTPASKKVPLPGPGSPEVKRAHGTPPPVSPKPPPPPTAPKPAKALAGLQSSSATPSPVPSPARQPPAALIKPASSPPSQSASPVKPPSPGTPALHVPAKPPRAAASVVSGPPVASDCASPGDSARQKLEETSACLAAALQAVEEKIRQEDGQGPRPSSIEEKSTGSILEDIGSMFDDLADQLDAMLE.

ANK repeat units follow at residues 48 to 77, 81 to 110, 114 to 143, 147 to 176, 188 to 217, and 220 to 249; these read DGFS…AVDI, KGMR…AVNV, EGHI…NPCM, SGKT…CAAL, NGTS…DINR, and KSGT…NAQV. Residue Tyr253 is modified to Phosphotyrosine. Positions 281-347 constitute an SH3 domain; it reads SAALQVRATK…PSSLGEAIVK (67 aa). The segment at 348-372 is disordered; that stretch reads RAGSRTGSEPSPPQGGGSLGPSAPP. Ser358 is subject to Phosphoserine. Residues 375–471 form a CASK-binding region; the sequence is IWVLRKPFAG…PKKLESASAS (97 aa). An Omega-N-methylarginine modification is found at Arg398. Residues 420–430 show a composition bias toward polar residues; that stretch reads SQKSVSESSPG. Residues 420–471 form a disordered region; the sequence is SQKSVSESSPGDSPVKPPEGSSGAARSQPPAAHAGQVYGEQPPKKLESASAS. Phosphoserine occurs at positions 423 and 432. SAM domains are found at residues 476–539 and 545–609; these read KSAE…LNIP and HKPA…LAEL. Phosphoserine occurs at positions 637 and 650. Residues 669 to 679 show a composition bias toward low complexity; sequence LSGPAEAGAAA. Disordered stretches follow at residues 669–1000 and 1016–1041; these read LSGP…TGSA and GGGG…EPGR. Residues 692–712 are compositionally biased toward polar residues; that stretch reads RTTSRESSLSGRARHISSSQE. 2 positions are modified to phosphoserine: Ser723 and Ser728. Thr741 is subject to Phosphothreonine. Phosphoserine is present on Ser791. Residues 848-860 show a composition bias toward pro residues; that stretch reads PPAPGPAPPPVPA. Ser891, Ser893, and Ser989 each carry phosphoserine. Pro residues predominate over residues 1028 to 1037; sequence GHPTPRPASP. Phosphothreonine is present on Thr1067. Position 1069 is a phosphoserine (Ser1069). 2 disordered regions span residues 1072–1372 and 1389–1410; these read VTGL…RQKL and KIRQ…STGS. The span at 1148–1160 shows a compositional bias: basic and acidic residues; that stretch reads DTVKRRPKAKEPD. Pro residues predominate over residues 1191 to 1215; that stretch reads PELPPPPPPAEPPPADLMQLPPLPL. Over residues 1236 to 1247 the composition is skewed to polar residues; sequence QPVSKIQGSPTP. Ser1259 is subject to Phosphoserine. The residue at position 1268 (Thr1268) is a Phosphothreonine. The span at 1268–1283 shows a compositional bias: pro residues; that stretch reads TPPPVSPKPPPPPTAP. 3 stretches are compositionally biased toward low complexity: residues 1284-1299, 1309-1327, and 1345-1359; these read KPAK…SATP, PPAA…SASP, and PRAA…PVAS. Ser1363 carries the phosphoserine modification. Positions 1389–1407 are enriched in basic and acidic residues; it reads KIRQEDGQGPRPSSIEEKS.

Binds the CaM kinase domain of CASK. Forms a ternary complex with CASK and LIN7A, LIN7B or LIN7C. Competes with APBA1 that forms a similar complex with CASK and LIN7 proteins. The tripartite complex CASKIN1/CASK/LIN7(A/B/C) binds the cytoplasmic tail of NRXN1. Polymerizes, via the tandem SAM domains, to form long, 8 nM wide fibers, upon which other proteins can assemble.

The protein resides in the cytoplasm. In terms of biological role, may link the scaffolding protein CASK to downstream intracellular effectors. The polypeptide is Caskin-1 (Caskin1) (Mus musculus (Mouse)).